We begin with the raw amino-acid sequence, 1088 residues long: Calcium-transporting ATPase 5, plasma membrane-type (1088 aa).

Residues 1–11 (MESASSSLATS) show a composition bias toward low complexity. Residues 1 to 32 (MESASSSLATSGRRRSSSGGGGGSWGSIGSAA) form a disordered region. Residues 1–198 (MESASSSLAT…FLWDACKDLT (198 aa)) are Cytoplasmic-facing. The chain crosses the membrane as a helical span at residues 199–219 (LIILMVAAAVSLALGITTEGI). The Extracellular segment spans residues 220 to 221 (KE). Residues 222-242 (GWYDGASIAFAVLLVVVVTAT) form a helical membrane-spanning segment. The Cytoplasmic segment spans residues 243 to 338 (SDYKQSLQFQ…MSGCKVADGY (96 aa)). The chain crosses the membrane as a helical span at residues 339–359 (GTMLVTAVGINTEWGLLMASI). Topologically, residues 360–375 (SEDSGEETPLQVRLNG) are extracellular. The helical transmembrane segment at 376-396 (VATFIGMVGLSVALAVLVVLL) threads the bilayer. Residues 397–425 (ARYFTGHTYNPDGSVQYVKGKMGVGQTIR) are Cytoplasmic-facing. The helical transmembrane segment at 426–446 (GIVGIFTVAVTIVVVAVPEGL) threads the bilayer. Topologically, residues 447–851 (PLAVTLTLAF…GRSVYANIQK (405 aa)) are extracellular. The active-site 4-aspartylphosphate intermediate is D486. N-linked (GlcNAc...) asparagine glycans are attached at residues N532, N569, and N737. Mg(2+)-binding residues include D794 and D798. The helical transmembrane segment at 852–872 (FIQFQLTVNVAALIINVVAAV) threads the bilayer. The Cytoplasmic segment spans residues 873–880 (SSGNVPLN). A helical transmembrane segment spans residues 881–901 (AVQLLWVNLIMDTLGALALAT). The Extracellular portion of the chain corresponds to 902–919 (EPPTDHLMQRPPVGRREP). Residues 920–940 (LITNVMWRNLIIMALFQVIVL) traverse the membrane as a helical segment. Over 941–1000 (LTLNFRGTSLLQLKNDNQAHADKVKNTFIFNTFVLCQVFNEFNARKPDELNIFKGITGNH) the chain is Cytoplasmic. The chain crosses the membrane as a helical span at residues 1001–1021 (LFMAIVAITVVLQALIVEFLG). Residues 1022–1030 (KFTSTTRLT) are Extracellular-facing. The helical transmembrane segment at 1031 to 1051 (WQLWLVSIGLAFFSWPLAFVG) threads the bilayer. The Cytoplasmic segment spans residues 1052–1088 (KLIPVPERPLGDFFACCCPGSKQAADAKGDDADHSDV).

The protein belongs to the cation transport ATPase (P-type) (TC 3.A.3) family. Type IIB subfamily. Interacts with NOH1.

It is found in the cell membrane. It carries out the reaction Ca(2+)(in) + ATP + H2O = Ca(2+)(out) + ADP + phosphate + H(+). Its activity is regulated as follows. Activated by calmodulin. Functionally, this magnesium-dependent enzyme catalyzes the hydrolysis of ATP coupled with the translocation of calcium from the cytosol out of the cell, into the endoplasmic reticulum, or into organelles. Involved in salt and drought stress tolerance. Involved in cold stress tolerance. The protein is Calcium-transporting ATPase 5, plasma membrane-type of Oryza sativa subsp. japonica (Rice).